Reading from the N-terminus, the 88-residue chain is Cell division topological specificity factor (88 aa).

Belongs to the MinE family.

Its function is as follows. Prevents the cell division inhibition by proteins MinC and MinD at internal division sites while permitting inhibition at polar sites. This ensures cell division at the proper site by restricting the formation of a division septum at the midpoint of the long axis of the cell. This chain is Cell division topological specificity factor, found in Shewanella denitrificans (strain OS217 / ATCC BAA-1090 / DSM 15013).